A 244-amino-acid polypeptide reads, in one-letter code: MQALLFLMALLLPSGAGAEEIIGGVEAKPHSRPYMAYLKFTTKNGSKERCGGFLIAPQFVMTAAHCNGSEISVILGAHNINKNEPTQQIIKTEKTFVHPKFQYLSGFYDIMLLKLQKKAELNSDVDVISLPSSSDFIKPGKMCWTAGWGKTGKNNPLSVTLREVELRIMDQEACKDHSDYDYQLQVCAGSPTTSKSIGQGDSGGPLVCDSVAHGIASSYEAKAPAVFTRISYYLPWIYKVLKSK.

The first 18 residues, 1 to 18 (MQALLFLMALLLPSGAGA), serve as a signal peptide directing secretion. Residues 19-20 (EE) constitute a propeptide, activation peptide. Positions 21–242 (IIGGVEAKPH…YLPWIYKVLK (222 aa)) constitute a Peptidase S1 domain. Asparagine 44 carries N-linked (GlcNAc...) asparagine glycosylation. Cysteine 50 and cysteine 66 are joined by a disulfide. Active-site charge relay system residues include histidine 65 and aspartate 109. 2 disulfides stabilise this stretch: cysteine 143–cysteine 208 and cysteine 174–cysteine 187. Serine 202 acts as the Charge relay system in catalysis.

Belongs to the peptidase S1 family. Granzyme subfamily. In terms of tissue distribution, mucosal mast cells.

The protein is Mast cell protease 2 (Mcpt2) of Mus musculus (Mouse).